The primary structure comprises 34 residues: uncharacterized protein (34 aa).

This is an uncharacterized protein from Escherichia coli (Bacteriophage T4).